We begin with the raw amino-acid sequence, 619 residues long: Cationic amino acid transporter 3 (619 aa).

Residues 1 to 36 lie on the Cytoplasmic side of the membrane; that stretch reads MPWQAFRRFGQKLVRRRTLESGMAETRLARCLSTLD. Residues 37-57 form a helical membrane-spanning segment; it reads LVALGVGSTLGAGVYVLAGEV. Topologically, residues 58 to 61 are extracellular; sequence AKDK. A helical membrane pass occupies residues 62-82; the sequence is AGPSIVICFLVAALSSVLAGL. At 83 to 107 the chain is on the cytoplasmic side; sequence CYAEFGARVPRSGSAYLYSYVTVGE. Residues 108-128 traverse the membrane as a helical segment; it reads LWAFTTGWNLILSYVIGTASV. Residues 129–162 are Extracellular-facing; the sequence is ARAWSSAFDNLIGNHISKTLQGSIALHVPHVLAE. Residues 163–183 form a helical membrane-spanning segment; that stretch reads YPDFFALGLVLLLTGLLALGA. Residues 184-191 are Cytoplasmic-facing; sequence SESALVTK. A helical transmembrane segment spans residues 192-212; it reads VFTGVNLLVLGFVMISGFVKG. Topologically, residues 213–233 are extracellular; it reads DVHNWKLTEEDYELAMAELND. N-linked (GlcNAc...) asparagine glycosylation is present at Asn232. A helical membrane pass occupies residues 234–254; that stretch reads TYSLGPLGSGGFVPFGFEGIL. The Cytoplasmic portion of the chain corresponds to 255–285; that stretch reads RGAATCFYAFVGFDCIATTGEEAQNPQRSIP. The chain crosses the membrane as a helical span at residues 286-306; sequence MGIVISLSVCFLAYFAVSSAL. The Extracellular segment spans residues 307–335; it reads TLMMPYYQLQPESPLPEAFLYIGWAPARY. Residues 336–356 traverse the membrane as a helical segment; that stretch reads VVAVGSLCALSTSLLGSMFPM. Residues 357–382 are Cytoplasmic-facing; sequence PRVIYAMAEDGLLFRVLARIHTGTRT. A helical membrane pass occupies residues 383-403; it reads PIIATVVSGIIAAFMAFLFKL. At 404 to 406 the chain is on the extracellular side; sequence TDL. Residues 407–427 form a helical membrane-spanning segment; it reads VDLMSIGTLLAYSLVSICVLI. Over 428–475 the chain is Cytoplasmic; that stretch reads LRYQPDQETKTGEEVELQEEAITTESEKLTLWGLFFPLNSIPTPLSGQ. Residues 476-496 traverse the membrane as a helical segment; the sequence is IVYVCSSLLAVLLTALCLVLA. Over 497–506 the chain is Extracellular; the sequence is QWSVPLLSGD. A helical membrane pass occupies residues 507–527; that stretch reads LLWTAVVVLLLLLIIGIIVVI. The Cytoplasmic portion of the chain corresponds to 528–540; that stretch reads WRQPQSSTPLHFK. Residues 541–561 traverse the membrane as a helical segment; it reads VPALPLLPLMSIFVNIYLMMQ. Topologically, residues 562 to 569 are extracellular; sequence MTAGTWAR. A helical transmembrane segment spans residues 570–590; sequence FGVWMLIGFAIYFGYGIQHSL. Residues 591–619 lie on the Cytoplasmic side of the membrane; it reads EEIKSNQPSRKSRAKTVDLDPGTLYVHSV. Thr606 carries the post-translational modification Phosphothreonine. Ser618 carries the phosphoserine modification.

The protein belongs to the amino acid-polyamine-organocation (APC) superfamily. Cationic amino acid transporter (CAT) (TC 2.A.3.3) family. Post-translationally, N-glycosylated. Highly expressed in thymus, uterus and testis. Detected at lower levels in brain, mammary gland, prostate, salivary gland and fetal spleen. In brain, highest expression in thalamus, hippocampus and amygdala.

It localises to the cell membrane. It carries out the reaction L-arginine(in) = L-arginine(out). It catalyses the reaction L-lysine(in) = L-lysine(out). The catalysed reaction is L-ornithine(in) = L-ornithine(out). Its function is as follows. Uniporter that mediates the uptake of cationic L-amino acids such as L-arginine, L-lysine and L-ornithine. The transport is sodium ions- and pH-independent, moderately trans-stimulated and is mediated by passive diffusion. This chain is Cationic amino acid transporter 3, found in Homo sapiens (Human).